The sequence spans 793 residues: Kinesin-like protein KIF3C (793 aa).

One can recognise a Kinesin motor domain in the interval 10-365 (ALKVVARCRP…LRFANRAKNI (356 aa)). Residue 97–104 (GQTGTGKT) participates in ATP binding. 3 disordered regions span residues 251–288 (ERQN…ERPK), 395–423 (EKRG…GYPE), and 756–793 (KVRK…ADHE). Residues 270-284 (GGSGGGGGSGGGAGG) show a composition bias toward gly residues. Residues 376–630 (KDTLLREFQE…QNEQTRELKL (255 aa)) adopt a coiled-coil conformation. Positions 399-413 (MLGKRPRRKSSRGKK) are enriched in basic residues. The tract at residues 631 to 793 (KYLIIENFIP…LRPATVADHE (163 aa)) is globular.

Belongs to the TRAFAC class myosin-kinesin ATPase superfamily. Kinesin family. Kinesin II subfamily. As to quaternary structure, heterodimer of KIF3A and KIF3C.

It localises to the cytoplasm. Its subcellular location is the cytoskeleton. In terms of biological role, microtubule-based anterograde translocator for membranous organelles. This chain is Kinesin-like protein KIF3C (KIF3C), found in Pongo abelii (Sumatran orangutan).